The primary structure comprises 418 residues: Serine hydroxymethyltransferase (418 aa).

Residues Leu-121 and Gly-125–Leu-127 contribute to the (6S)-5,6,7,8-tetrahydrofolate site. Lys-230 carries the post-translational modification N6-(pyridoxal phosphate)lysine. Ser-355–Phe-357 contacts (6S)-5,6,7,8-tetrahydrofolate.

The protein belongs to the SHMT family. Homodimer. Pyridoxal 5'-phosphate is required as a cofactor.

It is found in the cytoplasm. The enzyme catalyses (6R)-5,10-methylene-5,6,7,8-tetrahydrofolate + glycine + H2O = (6S)-5,6,7,8-tetrahydrofolate + L-serine. The protein operates within one-carbon metabolism; tetrahydrofolate interconversion. It participates in amino-acid biosynthesis; glycine biosynthesis; glycine from L-serine: step 1/1. Functionally, catalyzes the reversible interconversion of serine and glycine with tetrahydrofolate (THF) serving as the one-carbon carrier. This reaction serves as the major source of one-carbon groups required for the biosynthesis of purines, thymidylate, methionine, and other important biomolecules. Also exhibits THF-independent aldolase activity toward beta-hydroxyamino acids, producing glycine and aldehydes, via a retro-aldol mechanism. This Streptococcus pyogenes serotype M5 (strain Manfredo) protein is Serine hydroxymethyltransferase.